Consider the following 39-residue polypeptide: Cytochrome b559 subunit beta (39 aa).

Residues 14 to 30 traverse the membrane as a helical segment; it reads WLAIHGLAVPTVFFLGS. Histidine 18 lines the heme pocket.

As to quaternary structure, heterodimer of an alpha subunit and a beta subunit. PSII is composed of 1 copy each of membrane proteins PsbA, PsbB, PsbC, PsbD, PsbE, PsbF, PsbH, PsbI, PsbJ, PsbK, PsbL, PsbM, PsbT, PsbX, PsbY, PsbZ, Psb30/Ycf12, at least 3 peripheral proteins of the oxygen-evolving complex and a large number of cofactors. It forms dimeric complexes. Heme b serves as cofactor. Post-translationally, the N-terminus is blocked.

The protein resides in the plastid. The protein localises to the chloroplast thylakoid membrane. Its function is as follows. This b-type cytochrome is tightly associated with the reaction center of photosystem II (PSII). PSII is a light-driven water:plastoquinone oxidoreductase that uses light energy to abstract electrons from H(2)O, generating O(2) and a proton gradient subsequently used for ATP formation. It consists of a core antenna complex that captures photons, and an electron transfer chain that converts photonic excitation into a charge separation. This is Cytochrome b559 subunit beta from Spinacia oleracea (Spinach).